A 226-amino-acid chain; its full sequence is MLSMFMCNNIVDYVDDIDNGIVQDIEDEASNNVDHDYVYPLPENMVYRFDKSTNILDYLSTERDHVMMAVRYYMSKQRLDDLYRQLPTKTRSYIDIINIYCDKVSNDYNRDMNIMYDMASTKSFTVYDINNEVNTILMDNKGLGVRLATISFITELGRRCMNPVETIKMFTLLSHTICDDYFVDYITDISPPDNTIPNTSTREYLKLIGITAIMFATYKTLKYMIG.

The interval 32 to 37 (NVDHDY) is essential and sufficient to inhibit host NLRP1.

Belongs to the orthopoxvirus OPG045 family. As to quaternary structure, homodimer. Interacts with host pro-apoptotic protein BCL2L11 (via BH3 domain). Interacts with host NLRP1. Interacts with host BAK.

The protein localises to the host mitochondrion outer membrane. Its subcellular location is the host cytoplasm. Plays a role in evading host innate immune response by inhibiting host inflammasome activation. Interacts with and inhibits NLR-mediated interleukin-1 beta/IL1B production in infected cells. At the host mitochondria outer membrane, interacts with the BH3 domain of host BAK and prevents BAK from binding active BAX. In turn, host apoptosis is inhibited. This Vaccinia virus (strain Western Reserve) (VACV) protein is Apoptosis regulator OPG045 (OPG045).